The sequence spans 188 residues: Probable thymidylate kinase (188 aa).

11-18 (GIDGSGKT) provides a ligand contact to ATP.

It belongs to the thymidylate kinase family.

The enzyme catalyses dTMP + ATP = dTDP + ADP. The chain is Probable thymidylate kinase (tmk) from Methanocaldococcus jannaschii (strain ATCC 43067 / DSM 2661 / JAL-1 / JCM 10045 / NBRC 100440) (Methanococcus jannaschii).